We begin with the raw amino-acid sequence, 130 residues long: MIGNWNYGTGRRKSAVARVFIKAGKGDIIVNGKPIADYFARETSLMIVRQPLELTNHAQTFDIKVNVSGGGETGQAGAVRHGITRALIDYDATLKPALSNAGFVTRDAREVERKKVGLHKARRAKQFSKR.

The protein belongs to the universal ribosomal protein uS9 family.

This chain is Small ribosomal subunit protein uS9, found in Burkholderia multivorans (strain ATCC 17616 / 249).